Here is a 418-residue protein sequence, read N- to C-terminus: STAM-binding protein-like A (418 aa).

The interval 199–218 is disordered; it reads PDVHGPPQASLSPQTPPAGA. One can recognise an MPN domain in the interval 251–382; sequence LFVPAELCQR…LTDYGMDDVG (132 aa). Zn(2+) contacts are provided by His-329, His-331, Asp-342, His-344, Cys-384, His-390, and His-392. The JAMM motif motif lies at 329-342; it reads HTHPTQTAFLSSVD.

This sequence belongs to the peptidase M67C family. The cofactor is Zn(2+).

Its function is as follows. Zinc metalloprotease that specifically cleaves 'Lys-63'-linked polyubiquitin chains. Does not cleave 'Lys-48'-linked polyubiquitin chains. Functions at the endosome and is able to oppose the ubiquitin-dependent sorting of receptors to lysosomes. This Danio rerio (Zebrafish) protein is STAM-binding protein-like A (stambpa).